Reading from the N-terminus, the 153-residue chain is MSAEAGATVEQNHSYDMSCIFCRIANKQESGAELLHSDDDLVCFKDIRPAVTHHYLVVPKKHVGTCKTLTKDHVQLIKTMMEVGKSTLQKNNVTDLEDIRLGFHYPPFCSISHLHLHVLAPASQLGFLSRMIYRVNSYWFITADELIDQLQAS.

Residues 20 to 130 (IFCRIANKQE…PASQLGFLSR (111 aa)) form the HIT domain. Residues 46–47 (DI) and 115–117 (HLH) contribute to the AMP site. The short motif at 113–117 (HLHLH) is the Histidine triad motif element. Residue histidine 115 is the Tele-AMP-histidine intermediate of the active site.

This sequence belongs to the HINT family. Forms dimers to octamers and even larger oligomer.

Its subcellular location is the cytoplasm. The protein localises to the nucleus. It carries out the reaction adenosine 5'-phosphoramidate + H2O = AMP + NH4(+). Functionally, exhibits adenosine 5'-monophosphoramidase activity, hydrolyzing purine nucleotide phosphoramidates with a single phosphate group such as adenosine 5'monophosphoramidate (AMP-NH2) to yield AMP and NH2. Hydrolyzes lysyl-AMP (AMP-N-epsilon-(N-alpha-acetyl lysine methyl ester)) generated by lysine tRNA ligase. This is Adenosine 5'-monophosphoramidase HINT3 (hint3) from Xenopus tropicalis (Western clawed frog).